The primary structure comprises 196 residues: DnaA initiator-associating protein DiaA (196 aa).

Residues 34–196 (LVHSLLNGNK…DNTLFPHQDD (163 aa)) enclose the SIS domain.

The protein belongs to the SIS family. DiaA subfamily. Homotetramer; dimer of dimers.

Its function is as follows. Required for the timely initiation of chromosomal replication via direct interactions with the DnaA initiator protein. The protein is DnaA initiator-associating protein DiaA of Salmonella enteritidis PT4 (strain P125109).